Reading from the N-terminus, the 489-residue chain is CDK5RAP3 protein homolog (489 aa).

Belongs to the CDK5RAP3 family.

Its function is as follows. Substrate adapter of E3 ligase complexes mediating ufmylation, the covalent attachment of the ubiquitin-like modifier UFM1 to substrate proteins, and which is involved in various processes, such as ribosome recycling and reticulophagy (also called ER-phagy). This is CDK5RAP3 protein homolog from Caenorhabditis elegans.